Consider the following 565-residue polypeptide: MTERTLSGIGVTPLSGVGTVVWYRPDADLPEPPAPVDVDAEAELARFEDARAAAEDELEAERERTAERVGEEEAAVFDAHVQFLNDPQITDGVSDAIESGLPAEHAVQETFTEFVEQFENMGGRMGERADDLRDVRDRLVRVLSDGERVDLSSLPEGSVVVAERLTPSDTAQLDPERVAGFVTVTGGRTSHAAIFARSLALPAIVGVGEELQSVEDGTEVVVDGESGDLVVDPSDERKEAAAAAADVDIRHEAVETADGVDIEVAANIGTLADLGPAVDRGADGVGLFRTEFLFLDRESPPDEDEQYEAYVEALESFDGGRVVVRTLDIGGDKPVPYLDLPDEENPFLGERGIRRSLGPDADLFETQVRALLRAAASADGANLSVMLPLVSTVEELRAGRERFESVAADLDAEGVANELPEFGIMVETPAAAFMADQFAPHVDFFSIGTNDLAQYVMAAERGNERVSELGDYRQPAVLRAIDATVSAAEGEDCWVGMCGEMAGDPDLTELLVGLGLDELSMSAVTVPQVKAAVAETDTADARDLAERVLQADTKAEVAEILTLDQ.

Residue His191 is the Tele-phosphohistidine intermediate of the active site. Phosphoenolpyruvate is bound by residues Arg289 and Arg325. Glu427 and Asp451 together coordinate Mg(2+). Residues 450 to 451 and Arg461 each bind phosphoenolpyruvate; that span reads ND. Cys498 (proton donor) is an active-site residue.

Belongs to the PEP-utilizing enzyme family. In terms of assembly, homodimer. The cofactor is Mg(2+).

The protein localises to the cytoplasm. It catalyses the reaction L-histidyl-[protein] + phosphoenolpyruvate = N(pros)-phospho-L-histidyl-[protein] + pyruvate. In terms of biological role, general (non sugar-specific) component of the phosphoenolpyruvate-dependent sugar phosphotransferase system (sugar PTS). This major carbohydrate active-transport system catalyzes the phosphorylation of incoming sugar substrates concomitantly with their translocation across the cell membrane. Enzyme I transfers the phosphoryl group from phosphoenolpyruvate (PEP) to the phosphoryl carrier protein (HPr). The protein is Phosphoenolpyruvate-protein phosphotransferase (ptsI) of Haloferax volcanii (strain ATCC 29605 / DSM 3757 / JCM 8879 / NBRC 14742 / NCIMB 2012 / VKM B-1768 / DS2) (Halobacterium volcanii).